The chain runs to 262 residues: 2-keto-4-pentenoate hydratase (262 aa).

The protein belongs to the hydratase/decarboxylase family. MhpD subfamily. Requires a divalent metal cation as cofactor.

It carries out the reaction (S)-4-hydroxy-2-oxopentanoate = (2Z)-2-hydroxypenta-2,4-dienoate + H2O. It functions in the pathway aromatic compound metabolism; 3-phenylpropanoate degradation. Catalyzes the conversion of 2-hydroxypentadienoic acid (enolic form of 2-oxopent-4-enoate) to 4-hydroxy-2-ketopentanoic acid. This chain is 2-keto-4-pentenoate hydratase, found in Burkholderia vietnamiensis (strain G4 / LMG 22486) (Burkholderia cepacia (strain R1808)).